The following is a 373-amino-acid chain: Alanine racemase (373 aa).

Lys-40 serves as the catalytic Proton acceptor; specific for D-alanine. N6-(pyridoxal phosphate)lysine is present on Lys-40. Arg-140 is a substrate binding site. Tyr-268 serves as the catalytic Proton acceptor; specific for L-alanine. Met-315 is a binding site for substrate.

This sequence belongs to the alanine racemase family. It depends on pyridoxal 5'-phosphate as a cofactor.

The catalysed reaction is L-alanine = D-alanine. Its pathway is amino-acid biosynthesis; D-alanine biosynthesis; D-alanine from L-alanine: step 1/1. Its function is as follows. Catalyzes the interconversion of L-alanine and D-alanine. May also act on other amino acids. This chain is Alanine racemase (alr), found in Limosilactobacillus fermentum (strain NBRC 3956 / LMG 18251) (Lactobacillus fermentum).